The primary structure comprises 276 residues: Proteasome subunit beta type-8 (276 aa).

A propeptide spans 1 to 72 (MALLEVCGAP…KNIRKEMVHG (72 aa)) (removed in mature form). The active-site Nucleophile is the T73.

Belongs to the peptidase T1B family. As to quaternary structure, the 26S proteasome consists of a 20S proteasome core and two 19S regulatory subunits. The 20S proteasome core is composed of 28 subunits that are arranged in four stacked rings, resulting in a barrel-shaped structure. The two end rings are each formed by seven alpha subunits, and the two central rings are each formed by seven beta subunits. The catalytic chamber with the active sites is on the inside of the barrel. Component of the immunoproteasome, where it displaces the equivalent housekeeping subunit PSMB5. Component of the spermatoproteasome, a form of the proteasome specifically found in testis. Directly interacts with POMP. In terms of processing, autocleaved. The resulting N-terminal Thr residue of the mature subunit is responsible for the nucleophile proteolytic activity.

It is found in the cytoplasm. The protein resides in the nucleus. It carries out the reaction Cleavage of peptide bonds with very broad specificity.. The proteasome is a multicatalytic proteinase complex which is characterized by its ability to cleave peptides with Arg, Phe, Tyr, Leu, and Glu adjacent to the leaving group at neutral or slightly basic pH. The proteasome has an ATP-dependent proteolytic activity. This subunit is involved in antigen processing to generate class I binding peptides. May participate in the generation of spliced peptides resulting from the ligation of two separate proteasomal cleavage products that are not contiguous in the parental protein. Required for adipocyte differentiation. This Canis lupus familiaris (Dog) protein is Proteasome subunit beta type-8 (PSMB8).